Here is an 86-residue protein sequence, read N- to C-terminus: uncharacterized protein (86 aa).

The helical transmembrane segment at 12-32 threads the bilayer; sequence IIFIFAIIIIVVLCVITYLYL.

The protein localises to the membrane. This is an uncharacterized protein from Escherichia coli (strain K12).